An 877-amino-acid chain; its full sequence is MKSSYGSSSNDLHAFVNEIKGEIQLSNINLDPYSFVSPSAYDTAWLSMIEEDINVDDNELKPMFQGCLDWIMCNQNAREGFWMNSTSYTTVADGRDEDGEKDMCILTSTLACVVALQKWNIGCFHLHKGTRYIERNTEMIIGKYINEEGSYPRWFAIKFTGILELAQKLGLHFVFSSRCIEMIKGMFYQRQEIIQREKLVHDCNYKPLLAYLEVLPSKLYVTNQEDIIVKSLDSMDGSLFQSPSATASAFMLTRNTKCLAYLQNLVQKCPNGVPQKYPLNEDLIKLSMVNLIESTGLGEFFGIEIEHVLEQVYSRYEEKDFERMPMSYLADQLHKDSLAFRMLRMHGRDVSPRSFCWFLNDQETRNHLERNIDSFLLVILSVYRATDLMFPGEHDLQEAREYTRNLLEKRRSIKEKMIMHELSTPWIARLKHLDHRMWIEDKNSNVLSMEKASFLRLHSSYSDKLTHLAARNFEFQQAKYCRELEELTMWVKKWGLSDIGFGREKTTYCYFATVTSLPYEYAIKFGKLAAKTAILITIADDFFDEKGSFNDLEGLTKAVLRWEGEELKSYGNIIFRALDDIVRETANTCRTHHKTDIIVHLRNIWGETFESWLREAEWSKKGHTSSMDEYIRNGMISIAAHTIALSISCLMEPCFPHNKLKPGNYDSITTLLMIIPRLLNDLQSYQKEQEQGKMNSVLLHMKNHPGLEIEDSIAHIEKIIDSKRKEFLEHVLVDGLSDLPKPCKEIHMSCCKVFEMFFNKKNRYDSNTEMLHDIKKALYDPINVYELSEMEPMPLMAHGDEYMILPLLLNSLPNILEFKRKDGYGAMKTSMCFGRSYRVNKRVMASQLDDQHKPLKIVASQRKPVPMMQSIFAPCFY.

The Mg(2+) site is built by aspartate 540 and aspartate 544. Substrate-binding residues include aspartate 540, aspartate 544, arginine 677, and asparagine 680. The short motif at 540 to 544 (DDFFD) is the DDXXD motif element. The Mg(2+) site is built by asparagine 680, serine 684, and glutamate 688.

This sequence belongs to the terpene synthase family. Tpsf subfamily. Requires Mg(2+) as cofactor. Mn(2+) is required as a cofactor. In terms of tissue distribution, expressed in leaves and flowers.

The protein resides in the cytoplasm. The catalysed reaction is (2E,6E,10E)-geranylgeranyl diphosphate + H2O = (6E,10E)-geranyllinalool + diphosphate. Its pathway is secondary metabolite biosynthesis; terpenoid biosynthesis. Involved in the biosynthesis of homoterpenes, attractants of herbivores parasitoids and predators (e.g. predatory mites and parasitoid wasps). Involved in diterpene (C20) biosynthesis. Catalyzes the conversion of geranylgeranyl diphosphate to (E,E)-geranyllinalool, the precursor of the insect-induced volatile C16-homoterpene TMTT. The chain is (E,E)-geranyllinalool synthase from Arabidopsis thaliana (Mouse-ear cress).